A 348-amino-acid chain; its full sequence is Peptidyl-Lys metalloendopeptidase (348 aa).

The signal sequence occupies residues 1–18 (MFSSVMVALVSLAVAVSA). A propeptide spanning residues 19–181 (NPGLSLKVSG…RATPTLTRPV (163 aa)) is cleaved from the precursor. Disulfide bonds link cysteine 186/cysteine 256 and cysteine 258/cysteine 278. The O-linked (Man) threonine; partial glycan is linked to threonine 223. Position 298 (histidine 298) interacts with Zn(2+). Residue glutamate 299 is part of the active site. Residues histidine 302 and aspartate 311 each contribute to the Zn(2+) site.

Requires Zn(2+) as cofactor.

It is found in the secreted. It carries out the reaction Preferential cleavage in proteins: -Xaa-|-Lys- (in which Xaa may be Pro).. Its activity is regulated as follows. Inhibited by chelating agents such as EDTA and 1,10-phenanthroline. This Grifola frondosa (Maitake) protein is Peptidyl-Lys metalloendopeptidase (MEP).